Reading from the N-terminus, the 205-residue chain is NADH-quinone oxidoreductase subunit J (205 aa).

The next 5 membrane-spanning stretches (helical) occupy residues 1–21, 26–46, 54–74, 89–109, and 142–162; these read MPIF…CVVL, VYSV…MILL, LLIV…IMML, LSLS…TIIL, and FMLP…SCIT.

Belongs to the complex I subunit 6 family.

The protein localises to the cell membrane. It catalyses the reaction a quinone + NADH + 5 H(+)(in) = a quinol + NAD(+) + 4 H(+)(out). Functionally, NDH-1 shuttles electrons from NADH, via FMN and iron-sulfur (Fe-S) centers, to quinones in the respiratory chain. Couples the redox reaction to proton translocation (for every two electrons transferred, four hydrogen ions are translocated across the cytoplasmic membrane), and thus conserves the redox energy in a proton gradient. The chain is NADH-quinone oxidoreductase subunit J (nuoJ) from Rickettsia prowazekii (strain Madrid E).